Here is a 48-residue protein sequence, read N- to C-terminus: MAVPKRRVSKTRAAKRRTHYKVSLPMPVKDKDGSYKMPHRANPTTKEY.

The span at 1–20 (MAVPKRRVSKTRAAKRRTHY) shows a compositional bias: basic residues. Residues 1 to 48 (MAVPKRRVSKTRAAKRRTHYKVSLPMPVKDKDGSYKMPHRANPTTKEY) are disordered.

It belongs to the bacterial ribosomal protein bL32 family.

The polypeptide is Large ribosomal subunit protein bL32 (Campylobacter jejuni subsp. doylei (strain ATCC BAA-1458 / RM4099 / 269.97)).